The sequence spans 166 residues: Immunity protein RhsIB (166 aa).

Functionally, immunity component of a toxin-immunity protein module, which functions as a cellular contact-dependent growth inhibition (CDI) system. Specifically inhibits its cognate toxin RhsB. Cell contact is necessary for growth inhibition. This Dickeya dadantii (strain 3937) (Erwinia chrysanthemi (strain 3937)) protein is Immunity protein RhsIB (rhsIB).